A 1484-amino-acid chain; its full sequence is Cystic fibrosis transmembrane conductance regulator (1484 aa).

Residues 1-77 (MQRSPLERAN…KLINALRRCF (77 aa)) lie on the Cytoplasmic side of the membrane. Residues 78-98 (FWRFMFYGLLLYLGEVTKAVQ) traverse the membrane as a helical segment. Residues 81 to 365 (FMFYGLLLYL…WAVQMWYDSI (285 aa)) enclose the ABC transmembrane type-1 1 domain. The Extracellular segment spans residues 99-122 (PLLLGRIIASYDPDNAHERSIAYY). A helical membrane pass occupies residues 123-146 (LGIGLCLLFIVRTLLLHPAVFGLH). The Cytoplasmic portion of the chain corresponds to 147 to 195 (HIGMQMRIALFSLIYKKTLKLSSRVLDKISTGQLVSLLSNNLNKFDEGL). A helical transmembrane segment spans residues 196–216 (ALAHFVWIAPLQVMLLMGLLW). The Extracellular segment spans residues 217–222 (DLLQAS). A helical transmembrane segment spans residues 223-243 (AFCGLAVLVVLVLFQAWLGHR). Over 244 to 298 (MMKYRDRRAGKINERLVITAEIIENIQSVKAYCWEEAMENMIESLRETELKLTRK) the chain is Cytoplasmic. The helical transmembrane segment at 299–319 (AAYMRYFNSSAFFFSGFFVVF) threads the bilayer. The Extracellular portion of the chain corresponds to 320 to 339 (LSVLPSMLTKGIVLRKIFTT). Residues 340–358 (ISFCIVLRMAVTRQFPWAV) traverse the membrane as a helical segment. Residues 359 to 859 (QMWYDSIGAI…YLRYMTIHKK (501 aa)) are Cytoplasmic-facing. ATP-binding positions include tryptophan 401, serine 434, 458–465 (GSTGAGKT), and glutamine 493. Positions 423–646 (SDDKNLIFSN…RPDFSSKLMG (224 aa)) constitute an ABC transporter 1 domain. Residue cysteine 524 is the site of S-palmitoyl cysteine attachment. Phosphoserine is present on residues serine 549 and serine 660. Residues 654-832 (SAERRNSILT…EEINEEDLKE (179 aa)) are disordered R region. Serine 670 is modified (phosphoserine; by PKA). Serine 686 carries the post-translational modification Phosphoserine. Lysine 688 participates in a covalent cross-link: Glycyl lysine isopeptide (Lys-Gly) (interchain with G-Cter in ubiquitin). Serine 700, serine 712, serine 737, serine 768, serine 791, serine 796, and serine 814 each carry phosphoserine. Residues 860 to 880 (LIFVLMMCLVIFLIEVAASLV) traverse the membrane as a helical segment. The ABC transmembrane type-1 2 domain occupies 860-1159 (LIFVLMMCLV…AVNASIDVDS (300 aa)). Over 881 to 922 (GLCLFKDGASRMNSTSNLNHTSTLDWFAVIVTNTSTYYMFYI) the chain is Extracellular. Residues asparagine 893, asparagine 899, and asparagine 913 are each glycosylated (N-linked (GlcNAc...) asparagine). A discontinuously helical membrane pass occupies residues 923–943 (YVGVADTLLALGFLRGLPLVH). Residues 944-994 (SLISVSKILHQKMLHSVLQAPMSTFNTLKTGSILNRFSKDMAILDDLLPLT) lie on the Cytoplasmic side of the membrane. The helical transmembrane segment at 995-1015 (IFDFIQLLLIVIGAVTVVSAL) threads the bilayer. Residues 1016-1017 (QP) lie on the Extracellular side of the membrane. A helical transmembrane segment spans residues 1018-1038 (YIFLASVPVVIAFVLLRAYFL). The Cytoplasmic portion of the chain corresponds to 1039 to 1099 (RTSQQLKQLE…TANWFLYLST (61 aa)). A helical membrane pass occupies residues 1100 to 1120 (LRWFQMRIEMVFVIFFILVTF). At 1121–1134 (ISILTTGDGEGKVG) the chain is on the extracellular side. The chain crosses the membrane as a helical span at residues 1135 to 1155 (IVLTLAMNIMGTLQWAVNASI). Residues 1156 to 1484 (DVDSLMRSVS…TEEEVQDTRL (329 aa)) are Cytoplasmic-facing. The region spanning 1212–1445 (MTVQDLTAKY…KSVFKQAISH (234 aa)) is the ABC transporter 2 domain. Residues tyrosine 1221 and 1246-1253 (GRTGSGKS) contribute to the ATP site. An interaction with GORASP2 region spans residues 1388–1484 (KTLKQAFTNC…TEEEVQDTRL (97 aa)). Cysteine 1397 carries the S-palmitoyl cysteine lipid modification. 2 positions are modified to phosphoserine: serine 1446 and serine 1460. A disordered region spans residues 1463 to 1484 (LSRPKITALQEETEEEVQDTRL). A compositionally biased stretch (acidic residues) spans 1473–1484 (EETEEEVQDTRL). Positions 1482 to 1484 (TRL) match the PDZ-binding motif.

This sequence belongs to the ABC transporter superfamily. ABCC family. CFTR transporter (TC 3.A.1.202) subfamily. Monomer; does not require oligomerization for channel activity. May form oligomers in the membrane. Interacts with SLC26A3, SLC26A6 and NHERF1. Interacts with SHANK2. Interacts with MYO6. Interacts (via C-terminus) with GOPC (via PDZ domain); this promotes CFTR internalization and thereby decreases channel activity. Interacts with SLC4A7 through NHERF1. Found in a complex with MYO5B and RAB11A. Interacts with ANO1. Interacts with SLC26A8. Interacts with AHCYL1; the interaction increases CFTR activity. Interacts with CSE1L. The core-glycosylated form interacts with GORASP2 (via PDZ GRASP-type 1 domain) in respone to ER stress. Interacts with MARCHF2; the interaction leads to CFTR ubiqtuitination and degradation. Interacts with ADGRG2. In terms of processing, N-glycosylated. Post-translationally, phosphorylated; cAMP treatment promotes phosphorylation and activates the channel. Dephosphorylation decreases the ATPase activity (in vitro). Phosphorylation at PKA sites activates the channel. Phosphorylation at PKC sites enhances the response to phosphorylation by PKA. Phosphorylated by AMPK; this inhibits channel activity. Ubiquitinated, leading to its degradation in the lysosome. Deubiquitination by USP10 in early endosomes enhances its endocytic recycling to the cell membrane. Ubiquitinated by RNF185 during ER stress. Ubiquitinated by MARCHF2.

The protein localises to the apical cell membrane. It is found in the early endosome membrane. Its subcellular location is the cell membrane. It localises to the recycling endosome membrane. The protein resides in the endoplasmic reticulum membrane. The protein localises to the nucleus. The enzyme catalyses ATP + H2O + closed Cl(-) channel = ADP + phosphate + open Cl(-) channel.. The catalysed reaction is chloride(in) = chloride(out). It carries out the reaction hydrogencarbonate(in) = hydrogencarbonate(out). It catalyses the reaction ATP + H2O = ADP + phosphate + H(+). Functionally, epithelial ion channel that plays an important role in the regulation of epithelial ion and water transport and fluid homeostasis. Mediates the transport of chloride ions across the cell membrane. Possesses an intrinsic ATPase activity and utilizes ATP to gate its channel; the passive flow of anions through the channel is gated by cycles of ATP binding and hydrolysis by the ATP-binding domains. The ion channel is also permeable to HCO(3)(-); selectivity depends on the extracellular chloride concentration. Exerts its function also by modulating the activity of other ion channels and transporters. Contributes to the regulation of the pH and the ion content of the epithelial fluid layer. Modulates the activity of the epithelial sodium channel (ENaC) complex, in part by regulating the cell surface expression of the ENaC complex. May regulate bicarbonate secretion and salvage in epithelial cells by regulating the transporter SLC4A7. Can inhibit the chloride channel activity of ANO1. Plays a role in the chloride and bicarbonate homeostasis during sperm epididymal maturation and capacitation. This chain is Cystic fibrosis transmembrane conductance regulator, found in Ornithorhynchus anatinus (Duckbill platypus).